Here is a 326-residue protein sequence, read N- to C-terminus: Archaeal actin homolog (326 aa).

ATP contacts are provided by residues Tyr-10–Lys-14, Ser-179, Gln-231, Gly-285–Asn-288, and Gln-311.

Belongs to the thermophilic archaeal actin family.

Its function is as follows. Polymerizes into bundles of filaments, forming a helix with a filament width of 5.5 nm and an axial repeating unit of 5.5 nm. Polymerization of Ta0583 requires NTP and is optimal with ATP, but GTP, UTP, CTP, and even the deoxy form of NTP can also support the polymerization reaction. Nucleoside diphosphate or AMP-PNP does not support polymerization. This is Archaeal actin homolog from Thermoplasma acidophilum (strain ATCC 25905 / DSM 1728 / JCM 9062 / NBRC 15155 / AMRC-C165).